The following is a 272-amino-acid chain: Large ribosomal subunit protein uL2 (272 aa).

The segment at 247 to 272 (PWGQPCKGFKTRNNKRTNSSIIKRRK) is disordered. A compositionally biased stretch (polar residues) spans 262-272 (RTNSSIIKRRK).

It belongs to the universal ribosomal protein uL2 family. In terms of assembly, part of the 50S ribosomal subunit. Forms a bridge to the 30S subunit in the 70S ribosome.

In terms of biological role, one of the primary rRNA binding proteins. Required for association of the 30S and 50S subunits to form the 70S ribosome, for tRNA binding and peptide bond formation. It has been suggested to have peptidyltransferase activity; this is somewhat controversial. Makes several contacts with the 16S rRNA in the 70S ribosome. The sequence is that of Large ribosomal subunit protein uL2 from Bdellovibrio bacteriovorus (strain ATCC 15356 / DSM 50701 / NCIMB 9529 / HD100).